Consider the following 142-residue polypeptide: Protein CPn_0742/CP_0003/CPj0742/CpB0770 (142 aa).

The disordered stretch occupies residues 115–142 (LHPTKESKRPKQKLSSTKKNKKKNWIPL). Residues 124–142 (PKQKLSSTKKNKKKNWIPL) show a composition bias toward basic residues.

The protein belongs to the chlamydial CPn_0742/CT_635/TC_0003 family.

The polypeptide is Protein CPn_0742/CP_0003/CPj0742/CpB0770 (Chlamydia pneumoniae (Chlamydophila pneumoniae)).